The following is a 485-amino-acid chain: Glutamyl-tRNA(Gln) amidotransferase subunit A (485 aa).

Catalysis depends on charge relay system residues K79 and S154. The active-site Acyl-ester intermediate is S178.

The protein belongs to the amidase family. GatA subfamily. Heterotrimer of A, B and C subunits.

It catalyses the reaction L-glutamyl-tRNA(Gln) + L-glutamine + ATP + H2O = L-glutaminyl-tRNA(Gln) + L-glutamate + ADP + phosphate + H(+). Its function is as follows. Allows the formation of correctly charged Gln-tRNA(Gln) through the transamidation of misacylated Glu-tRNA(Gln) in organisms which lack glutaminyl-tRNA synthetase. The reaction takes place in the presence of glutamine and ATP through an activated gamma-phospho-Glu-tRNA(Gln). In Staphylococcus aureus, this protein is Glutamyl-tRNA(Gln) amidotransferase subunit A.